A 135-amino-acid chain; its full sequence is Large-conductance mechanosensitive channel (135 aa).

A run of 2 helical transmembrane segments spans residues phenylalanine 10–glycine 30 and glycine 76–isoleucine 96.

This sequence belongs to the MscL family. In terms of assembly, homopentamer.

The protein resides in the cell inner membrane. Channel that opens in response to stretch forces in the membrane lipid bilayer. May participate in the regulation of osmotic pressure changes within the cell. This is Large-conductance mechanosensitive channel from Cronobacter sakazakii (strain ATCC BAA-894) (Enterobacter sakazakii).